A 579-amino-acid chain; its full sequence is Isocitrate dehydrogenase kinase/phosphatase (579 aa).

ATP is bound by residues alanine 324–methionine 330 and lysine 345. Aspartate 380 is a catalytic residue.

This sequence belongs to the AceK family.

Its subcellular location is the cytoplasm. The catalysed reaction is L-seryl-[isocitrate dehydrogenase] + ATP = O-phospho-L-seryl-[isocitrate dehydrogenase] + ADP + H(+). Its function is as follows. Bifunctional enzyme which can phosphorylate or dephosphorylate isocitrate dehydrogenase (IDH) on a specific serine residue. This is a regulatory mechanism which enables bacteria to bypass the Krebs cycle via the glyoxylate shunt in response to the source of carbon. When bacteria are grown on glucose, IDH is fully active and unphosphorylated, but when grown on acetate or ethanol, the activity of IDH declines drastically concomitant with its phosphorylation. This chain is Isocitrate dehydrogenase kinase/phosphatase, found in Xanthomonas campestris pv. campestris (strain 8004).